The primary structure comprises 362 residues: 3-dehydroquinate synthase (362 aa).

NAD(+) is bound by residues 72–77 (DGEQYK), 106–110 (GVVGD), 130–131 (TT), K143, K152, and 170–173 (CLKT). Zn(2+) contacts are provided by E185, H248, and H265.

The protein belongs to the sugar phosphate cyclases superfamily. Dehydroquinate synthase family. Requires Co(2+) as cofactor. The cofactor is Zn(2+). NAD(+) is required as a cofactor.

The protein localises to the cytoplasm. The catalysed reaction is 7-phospho-2-dehydro-3-deoxy-D-arabino-heptonate = 3-dehydroquinate + phosphate. The protein operates within metabolic intermediate biosynthesis; chorismate biosynthesis; chorismate from D-erythrose 4-phosphate and phosphoenolpyruvate: step 2/7. Functionally, catalyzes the conversion of 3-deoxy-D-arabino-heptulosonate 7-phosphate (DAHP) to dehydroquinate (DHQ). The chain is 3-dehydroquinate synthase from Aliivibrio fischeri (strain ATCC 700601 / ES114) (Vibrio fischeri).